A 65-amino-acid chain; its full sequence is MINPSFKKLSEINNSRYALCVMVSKRARMLIDGKETKLKKAKAQPVTTALEEVMEKKVWEDKSNE.

This sequence belongs to the RNA polymerase subunit omega family. As to quaternary structure, the RNAP catalytic core consists of 2 alpha, 1 beta, 1 beta' and 1 omega subunit. When a sigma factor is associated with the core the holoenzyme is formed, which can initiate transcription.

The catalysed reaction is RNA(n) + a ribonucleoside 5'-triphosphate = RNA(n+1) + diphosphate. Functionally, promotes RNA polymerase assembly. Latches the N- and C-terminal regions of the beta' subunit thereby facilitating its interaction with the beta and alpha subunits. In Finegoldia magna (strain ATCC 29328 / DSM 20472 / WAL 2508) (Peptostreptococcus magnus), this protein is DNA-directed RNA polymerase subunit omega.